The following is a 305-amino-acid chain: UDP-3-O-acyl-N-acetylglucosamine deacetylase (305 aa).

Zn(2+) is bound by residues histidine 78, histidine 235, and aspartate 239. Histidine 262 functions as the Proton donor in the catalytic mechanism.

It belongs to the LpxC family. Zn(2+) serves as cofactor.

The enzyme catalyses a UDP-3-O-[(3R)-3-hydroxyacyl]-N-acetyl-alpha-D-glucosamine + H2O = a UDP-3-O-[(3R)-3-hydroxyacyl]-alpha-D-glucosamine + acetate. The protein operates within glycolipid biosynthesis; lipid IV(A) biosynthesis; lipid IV(A) from (3R)-3-hydroxytetradecanoyl-[acyl-carrier-protein] and UDP-N-acetyl-alpha-D-glucosamine: step 2/6. In terms of biological role, catalyzes the hydrolysis of UDP-3-O-myristoyl-N-acetylglucosamine to form UDP-3-O-myristoylglucosamine and acetate, the committed step in lipid A biosynthesis. This Geobacter sp. (strain M21) protein is UDP-3-O-acyl-N-acetylglucosamine deacetylase.